A 1121-amino-acid chain; its full sequence is Peroxisomal ATPase PEX1 (1121 aa).

Disordered stretches follow at residues 187-221 and 1099-1121; these read SISS…NNGE and SGRD…STLM. Residues 205 to 217 are compositionally biased toward low complexity; that stretch reads SSTSTATGRRSVT.

The protein belongs to the AAA ATPase family. In terms of assembly, interacts with PEX6; forming the PEX1-PEX6 AAA ATPase complex, which is composed of a heterohexamer formed by a trimer of PEX1-PEX6 dimers.

The protein localises to the membrane. The enzyme catalyses ATP + H2O = ADP + phosphate + H(+). In terms of biological role, component of the PEX1-PEX6 AAA ATPase complex involved in peroxisome biosynthesis. The complex acts as a protein dislocase complex that mediates the ATP-dependent extraction of the PEX5 receptor from peroxisomal membranes, an essential step for PEX5 recycling. Specifically recognizes PEX5 monoubiquitinated at 'Cys-6', and pulls it out of the peroxisome lumen through the PEX2-PEX10-PEX12 retrotranslocation channel. Extraction by the PEX1-PEX6 AAA ATPase complex is accompanied by unfolding of the TPR repeats and release of bound cargo from PEX5. This chain is Peroxisomal ATPase PEX1, found in Komagataella phaffii (strain GS115 / ATCC 20864) (Yeast).